The sequence spans 370 residues: Gametogenetin-binding protein 1 (370 aa).

Disordered regions lie at residues 26 to 114 (VGSK…QTLT) and 240 to 263 (PAAPQLALKDGLPHEEKGEREEAV). Polar residues predominate over residues 31–49 (GSKSTNKPLTRSQPSSSWE). The required for induction of mitochondrial fragmentation stretch occupies residues 225 to 370 (LYKQLQKSAM…DEMGNWPPPD (146 aa)). Basic and acidic residues predominate over residues 250-260 (GLPHEEKGERE). Residues 298 to 370 (KKFRSTDTVG…DEMGNWPPPD (73 aa)) are interaction with GGN.

Interacts with CCDC159. Interacts with isoform 1 and isoform 2 of GGN. As to expression, testis-specific. In the testis, expressed only in germ cells and not in somatic cells. Expression starts in late primary spermatocytes in stage X-XII tubules and gradually increases towards step 1-3 spermatids in stage I-III tubules. Expression then declines continuously and disappears after step 7 spermatids in stage VII tubules (at protein level).

The protein resides in the cytoplasm. The protein localises to the membrane. It localises to the golgi apparatus. Its subcellular location is the mitochondrion intermembrane space. Functionally, induces mitochondrial fragmentation, possibly by promoting DNM1L-dependent fission and may play a role in mitochondrial morphogenesis during spermatogenesis. This Mus musculus (Mouse) protein is Gametogenetin-binding protein 1 (Ggnbp1).